The chain runs to 216 residues: MRTTLQPGLTNRLTKYLRVTQQLIEEGRDAVSSKELGDFTGINPVQVRRDLNAIGFSGTRGVGYQAYDLVEAVRGILGLRQTYNIALVGAGNLGSAIASSTILPKRGFVIHDVFDNDPQKIGRTVGNVVVKHIDELKKSVAEADEVIGIIATPASAAQQVADLMVEANIRVILNYTDVLLHVPPGVTVHRIDPTAQLMHTLYYLTQAETEEAAPAT.

Residues 15-54 (KYLRVTQQLIEEGRDAVSSKELGDFTGINPVQVRRDLNAI) constitute a DNA-binding region (H-T-H motif). 89–94 (GAGNLG) is an NAD(+) binding site.

It belongs to the transcriptional regulatory Rex family. In terms of assembly, homodimer.

The protein localises to the cytoplasm. Functionally, modulates transcription in response to changes in cellular NADH/NAD(+) redox state. The protein is Redox-sensing transcriptional repressor Rex of Rubrobacter xylanophilus (strain DSM 9941 / JCM 11954 / NBRC 16129 / PRD-1).